We begin with the raw amino-acid sequence, 425 residues long: Probable mitochondrial import inner membrane translocase subunit tin-44 (425 aa).

Residues 38–149 (FLNNLIDNVR…EHVEKVAEKV (112 aa)) adopt a coiled-coil conformation.

The protein belongs to the Tim44 family. Probable component of the PAM complex at least composed of a mitochondrial HSP70 protein, GrpE, tin-44, tim-16 and tim-14/dnj-21. The complex interacts with the tim-23 component of the TIM23 complex.

The protein localises to the mitochondrion inner membrane. Essential component of the PAM complex, a complex required for the translocation of transit peptide-containing proteins from the inner membrane into the mitochondrial matrix in an ATP-dependent manner. Recruits mitochondrial HSP70 to drive protein translocation into the matrix using ATP as an energy source. The protein is Probable mitochondrial import inner membrane translocase subunit tin-44 of Caenorhabditis elegans.